A 516-amino-acid chain; its full sequence is Gastrula zinc finger protein XlCGF53.1 (516 aa).

2 disordered regions span residues 1-33 (MGMW…GKKE) and 200-220 (GNQS…TDKP). A compositionally biased stretch (polar residues) spans 200 to 218 (GNQSDCSINPLTEQIQGTD). 7 C2H2-type zinc fingers span residues 312-334 (YICS…QKTH), 354-376 (FPCS…QSSH), 382-404 (YACS…LKLH), 410-432 (FPCS…RRVH), 438-460 (YSCS…QRTH), 466-488 (FSCT…HRTH), and 494-516 (FSCT…HRTH).

This sequence belongs to the krueppel C2H2-type zinc-finger protein family.

The protein resides in the nucleus. May be involved in transcriptional regulation. The protein is Gastrula zinc finger protein XlCGF53.1 of Xenopus laevis (African clawed frog).